Here is a 71-residue protein sequence, read N- to C-terminus: Small ribosomal subunit protein bS21 (71 aa).

The interval 38-71 is disordered; sequence YEKPTTVRKRAKAAAQKRHAKKLSRENARRVRLY. Residues 43 to 59 are compositionally biased toward basic residues; the sequence is TVRKRAKAAAQKRHAKK. Positions 60–71 are enriched in basic and acidic residues; the sequence is LSRENARRVRLY.

This sequence belongs to the bacterial ribosomal protein bS21 family.

This is Small ribosomal subunit protein bS21 from Aliivibrio fischeri (strain ATCC 700601 / ES114) (Vibrio fischeri).